We begin with the raw amino-acid sequence, 495 residues long: Glycerol kinase (495 aa).

Thr-11 is a binding site for ADP. The ATP site is built by Thr-11, Thr-12, and Ser-13. Thr-11 is a binding site for sn-glycerol 3-phosphate. Arg-15 is an ADP binding site. 4 residues coordinate sn-glycerol 3-phosphate: Arg-81, Glu-82, Tyr-133, and Asp-242. Residues Arg-81, Glu-82, Tyr-133, Asp-242, and Gln-243 each contribute to the glycerol site. Residues Thr-264 and Gly-307 each coordinate ADP. ATP is bound by residues Thr-264, Gly-307, Gln-311, and Gly-408. Positions 408 and 412 each coordinate ADP.

The protein belongs to the FGGY kinase family.

It catalyses the reaction glycerol + ATP = sn-glycerol 3-phosphate + ADP + H(+). The protein operates within polyol metabolism; glycerol degradation via glycerol kinase pathway; sn-glycerol 3-phosphate from glycerol: step 1/1. Inhibited by fructose 1,6-bisphosphate (FBP). Its function is as follows. Key enzyme in the regulation of glycerol uptake and metabolism. Catalyzes the phosphorylation of glycerol to yield sn-glycerol 3-phosphate. This is Glycerol kinase from Acinetobacter baylyi (strain ATCC 33305 / BD413 / ADP1).